A 202-amino-acid chain; its full sequence is MSRYRGPRVRIIRRLGALPGLTNKTPQLKSSSINQSASNKKISQYRIRLEEKQKLRFHYGITERQLLNYVRIARKAKGSTGEILLQLLEMRLDNVIFRLGMTPTIPGARQLVNHRHILVNGYIVDIPSYRCKPQDFINIKNQRKSEAIISKNIEFYQKYKIPNHLTYNSLEKKGLVNQILNRESIGLKINELLVVEYYSRQA.

An S4 RNA-binding domain is found at 90 to 153; the sequence is MRLDNVIFRL…KSEAIISKNI (64 aa).

It belongs to the universal ribosomal protein uS4 family. In terms of assembly, part of the 30S ribosomal subunit. Contacts protein S5. The interaction surface between S4 and S5 is involved in control of translational fidelity.

The protein localises to the plastid. Its subcellular location is the chloroplast. Functionally, one of the primary rRNA binding proteins, it binds directly to 16S rRNA where it nucleates assembly of the body of the 30S subunit. Its function is as follows. With S5 and S12 plays an important role in translational accuracy. The protein is Small ribosomal subunit protein uS4c (rps4) of Hypopterygium didictyon.